A 607-amino-acid polypeptide reads, in one-letter code: Terpenoid synthase 29 (607 aa).

Mg(2+) is bound by residues Asp358, Asp362, Asn502, Thr506, and Glu510. A DDXXD motif motif is present at residues 358-362; the sequence is DDTYD.

Belongs to the terpene synthase family. Tpsa subfamily. Mg(2+) is required as a cofactor. Requires Mn(2+) as cofactor. Predominantly expressed in flowers but also in siliques, roots, leaves and stems.

It is found in the cytoplasm. It functions in the pathway secondary metabolite biosynthesis; terpenoid biosynthesis. In Arabidopsis thaliana (Mouse-ear cress), this protein is Terpenoid synthase 29 (TPS29).